The sequence spans 2464 residues: Nonribosomal peptide synthetase NPS2 (2464 aa).

The tract at residues 275–670 (DDHHPGTSQP…GRIDTQIKLR (396 aa)) is adenylation 1. The region spanning 814-888 (TKAEGQLLEI…QIAKALDASS (75 aa)) is the Carrier 1 domain. Position 848 is an O-(pantetheine 4'-phosphoryl)serine (serine 848). Residues 924 to 1325 (IYPPFPLQEG…EGLALDLAQG (402 aa)) are condensation 1. In terms of domain architecture, Carrier 2 spans 1364–1437 (EDLLLRLRKI…RMAASAGKKI (74 aa)). The residue at position 1398 (serine 1398) is an O-(pantetheine 4'-phosphoryl)serine. Residues 1479–1887 (DVFPVTTLQA…LRVLVDDLDA (409 aa)) form a condensation 2 region. The 77-residue stretch at 1917–1993 (SSWDEKSSTL…DLVMRAGAED (77 aa)) folds into the Carrier 3 domain. The residue at position 1954 (serine 1954) is an O-(pantetheine 4'-phosphoryl)serine. The interval 2047-2340 (GGSRYQHVFG…ATQIQDDLRE (294 aa)) is condensation 3.

Belongs to the NRP synthetase family.

It functions in the pathway siderophore biosynthesis. In terms of biological role, nonribosomal peptide synthetase; part of the siderophore basidioferrin biosynthetic pathway. The biosynthesis of basidioferrin depends on the hydroxylation of ornithine to N(5)-hydroxyornithine, catalyzed by the monooxygenase SMO1. The second step, the acylation of N(5)-hydroxy-L-ornithine is catalyzed by a not yet identified N-acyltransferase. Finally, assembly of basidioferrin is catalyzed by the nonribosomal peptide synthase (NRPS) NPS2 via amide bond formation between three L-AHO molecules to release the linear L-AHO trimer. N-5-acetyl-N-5-hydroxy-L-ornithine (L-AHO) and N-5-cis-anhydromevalonyl-N-5-hydroxy-L-ornithine (L-AMHO) are accepted as the substrates by the NPS2 adenylation (A) domain, but only L-AHO is trimerized. In Ceriporiopsis subvermispora (strain B) (White-rot fungus), this protein is Nonribosomal peptide synthetase NPS2.